Here is a 236-residue protein sequence, read N- to C-terminus: H2HPP isomerase (236 aa).

2 Cupin type-1 domains span residues 40–106 and 151–215; these read YVPP…AIDI and NIPG…SKSV. Residues His-50, His-52, Gln-56, His-91, His-162, His-164, Gln-168, and His-202 each contribute to the a divalent metal cation site. Tyr-223 lines the substrate pocket.

As to quaternary structure, monomer. Fe(2+) is required as a cofactor. Co(2+) serves as cofactor.

The protein localises to the cytoplasm. It carries out the reaction 3-[(4R)-4-hydroxycyclohexa-1,5-dien-1-yl]-2-oxopropanoate = 3-[(1E,4R)-4-hydroxycyclohex-2-en-1-ylidene]pyruvate. It participates in antibiotic biosynthesis; bacilysin biosynthesis. Part of the bacABCDEF operon responsible for the biosynthesis of the nonribosomally synthesized dipeptide antibiotic bacilysin, composed of L-alanine and L-anticapsin. Bacilysin is an irreversible inactivator of the glutaminase domain of glucosamine synthetase. BacB catalyzes the allylic isomerization of the endocyclic-delta(4),delta(8)-7R-dihydro-hydroxyphenylpyruvate (en-H2HPP) to generate a mixture of 3E,7R- and 3Z, 7R-olefins of the exocyclic-delta(3),delta(5)-dihydro-hydroxyphenylpyruvate (ex-H2HPP). This chain is H2HPP isomerase, found in Bacillus subtilis.